Consider the following 79-residue polypeptide: Neurotoxin ShK-like1 (79 aa).

An N-terminal signal peptide occupies residues 1–25; sequence MSRKLLAVLMVCTFFLIAASMGTNA. Positions 26–35 are excised as a propeptide; sequence LPFHEGIERR. The region spanning 39–78 is the ShKT domain; sequence CVDKMPFVCMRKDIPAICKNRNHRSYAFIMDVCRKTCGQC. 3 disulfides stabilise this stretch: C39/C78, C47/C71, and C56/C75.

Expressed in nematocytes (in planulae and primary polyps). Is localized predominantly in the body column nematocytes and not in the tentacles (in primary polyps).

It localises to the nematocyst. It is found in the secreted. Neurotoxin. In vivo, induces contraction paralysis followed by death (within 2 hours) on zebrafish larvae. Also induces body contraction in Nematostella 11-dpf polyps. In Nematostella vectensis (Starlet sea anemone), this protein is Neurotoxin ShK-like1.